The following is a 749-amino-acid chain: NAD(P)H-quinone oxidoreductase subunit 5, chloroplastic (749 aa).

A run of 17 helical transmembrane segments spans residues 9-29 (WIIPFLPLPVPMLIGLGLLLF), 40-60 (WAFQSVLLLSIVMIFSMNLSI), 89-109 (IDPLTSIMLILITTVGIMVLI), 125-145 (FAYMSFFSTSMLGLVTSSNLI), 147-167 (IYIFWELVGICSYLLIGFWFT), 185-205 (GDFGLLLGILGFYWITGSFEF), 219-239 (NEVNFVFVTLCAVLLFAGAVA), 258-278 (TPISALIHAATMVAAGIFLVA), 290-312 (IMNFISLIGIITVFLGATLALAQ), 327-347 (LGYMMLALGMGSYRSALFHLI), 354-374 (ALLFLGSGSVIHSMETLVGYC), 396-416 (TSFLLGTLSLCGIPPLACFWS), 425-445 (WLYSPIFAIIAWSTAGLTAFY), 549-569 (LFPILILILFTLFVGFLGIPF), 608-628 (VFSVSIASFGIFIAFFLYKPV), 694-714 (IIDGIPNGVCLISFFVAEVIK), and 725-745 (LFFYFSYVSIFLLIYYFLNVF).

Belongs to the complex I subunit 5 family. As to quaternary structure, NDH is composed of at least 16 different subunits, 5 of which are encoded in the nucleus.

It localises to the plastid. Its subcellular location is the chloroplast thylakoid membrane. The catalysed reaction is a plastoquinone + NADH + (n+1) H(+)(in) = a plastoquinol + NAD(+) + n H(+)(out). It catalyses the reaction a plastoquinone + NADPH + (n+1) H(+)(in) = a plastoquinol + NADP(+) + n H(+)(out). Its function is as follows. NDH shuttles electrons from NAD(P)H:plastoquinone, via FMN and iron-sulfur (Fe-S) centers, to quinones in the photosynthetic chain and possibly in a chloroplast respiratory chain. The immediate electron acceptor for the enzyme in this species is believed to be plastoquinone. Couples the redox reaction to proton translocation, and thus conserves the redox energy in a proton gradient. The chain is NAD(P)H-quinone oxidoreductase subunit 5, chloroplastic (ndhF) from Atractylodes lancea (Atractylodes japonica).